Here is a 319-residue protein sequence, read N- to C-terminus: HTH-type transcriptional regulator YidZ (319 aa).

Positions 8 to 65 (LDLNLLLCLQLLMQERSVTKAAKRMNVTPSAVSKSLAKLRAWFDDPLFVNTPLGLAPT) constitute an HTH lysR-type domain. Positions 25–44 (VTKAAKRMNVTPSAVSKSLA) form a DNA-binding region, H-T-H motif.

Belongs to the LysR transcriptional regulatory family.

Involved in anaerobic NO protection. This chain is HTH-type transcriptional regulator YidZ, found in Salmonella typhi.